The sequence spans 283 residues: Protease HtpX (283 aa).

A run of 2 helical transmembrane segments spans residues 4–24 (IALF…ILSV) and 33–53 (GGIL…SLFM). Histidine 139 contributes to the Zn(2+) binding site. The active site involves glutamate 140. Zn(2+) is bound at residue histidine 143. Helical transmembrane passes span 147–167 (GDMV…IFLS) and 192–212 (FLVS…IAMW). Glutamate 218 is a Zn(2+) binding site.

It belongs to the peptidase M48B family. The cofactor is Zn(2+).

The protein resides in the cell inner membrane. The sequence is that of Protease HtpX from Glaesserella parasuis serovar 5 (strain SH0165) (Haemophilus parasuis).